The sequence spans 197 residues: Imidazoleglycerol-phosphate dehydratase (197 aa).

The protein belongs to the imidazoleglycerol-phosphate dehydratase family.

It is found in the cytoplasm. The catalysed reaction is D-erythro-1-(imidazol-4-yl)glycerol 3-phosphate = 3-(imidazol-4-yl)-2-oxopropyl phosphate + H2O. It functions in the pathway amino-acid biosynthesis; L-histidine biosynthesis; L-histidine from 5-phospho-alpha-D-ribose 1-diphosphate: step 6/9. This is Imidazoleglycerol-phosphate dehydratase from Chromohalobacter salexigens (strain ATCC BAA-138 / DSM 3043 / CIP 106854 / NCIMB 13768 / 1H11).